Reading from the N-terminus, the 336-residue chain is Nuclear egress protein 2 (336 aa).

Residues 1–315 (MASPEERLLD…AWRYSWRATP (315 aa)) are Perinuclear space-facing. 2 disordered regions span residues 193–221 (RSGQ…GCLG) and 277–297 (RTRE…VPPE). Over residues 277 to 288 (RTRETRRMRGSH) the composition is skewed to basic residues. The chain crosses the membrane as a helical span at residues 316–333 (YLARVLAVTAVALLLMFL). At 334-336 (RWT) the chain is on the nuclear side.

Belongs to the herpesviridae NEC2 protein family. Forms a heterodimeric viral nuclear egress complex (NEC) with NEC1. Interacts with host IKBKE; this interaction inhibits host IKBKE kinase activity and IRF3 nuclear translocation. Phosphorylated.

It is found in the host nucleus inner membrane. The protein localises to the host cytoplasm. The protein resides in the host perinuclear region. Functionally, plays an essential role in virion nuclear egress, the first step of virion release from infected cell. Within the host nucleus, NEC1 interacts with the newly formed capsid through the vertexes and directs it to the inner nuclear membrane by associating with NEC2. Induces the budding of the capsid at the inner nuclear membrane as well as its envelopment into the perinuclear space. There, the NEC1/NEC2 complex promotes the fusion of the enveloped capsid with the outer nuclear membrane and the subsequent release of the viral capsid into the cytoplasm where it will reach the secondary budding sites in the host Golgi or trans-Golgi network. Inhibits host IKBKE and IRF3, thereby impairing type I IFN signaling. This Homo sapiens (Human) protein is Nuclear egress protein 2.